The chain runs to 137 residues: Basic phospholipase A2 homolog APL-K49 (137 aa).

A signal peptide spans 1–16 (MRTLWIVALLLVGVEG). Cystine bridges form between Cys-42–Cys-131, Cys-44–Cys-60, Cys-59–Cys-111, Cys-65–Cys-137, Cys-66–Cys-104, Cys-73–Cys-97, and Cys-91–Cys-102. Residues 121–133 (KKYKAYFKLKCKK) are important for membrane-damaging activities in eukaryotes and bacteria; heparin-binding.

It belongs to the phospholipase A2 family. Group II subfamily. K49 sub-subfamily. As to quaternary structure, monomer. As to expression, expressed by the venom gland.

It is found in the secreted. Functionally, snake venom phospholipase A2 (PLA2) that lacks enzymatic activity. Does not show antibacterial activity. Is myotoxic and displays edema-inducing activities. A model of myotoxic mechanism has been proposed: an apo Lys49-PLA2 is activated by the entrance of a hydrophobic molecule (e.g. fatty acid) at the hydrophobic channel of the protein leading to a reorientation of a monomer. This reorientation causes a transition between 'inactive' to 'active' states, causing alignment of C-terminal and membrane-docking sites (MDoS) side-by-side and putting the membrane-disruption sites (MDiS) in the same plane, exposed to solvent and in a symmetric position for both monomers. The MDoS region stabilizes the toxin on membrane by the interaction of charged residues with phospholipid head groups. Subsequently, the MDiS region destabilizes the membrane with penetration of hydrophobic residues. This insertion causes a disorganization of the membrane, allowing an uncontrolled influx of ions (i.e. calcium and sodium), and eventually triggering irreversible intracellular alterations and cell death. The chain is Basic phospholipase A2 homolog APL-K49 from Agkistrodon piscivorus leucostoma (Western cottonmouth).